Here is a 67-residue protein sequence, read N- to C-terminus: UPF0519 protein C (67 aa).

The disordered stretch occupies residues 18–37; that stretch reads KSQANLNSNSTNSPNNVQGL. Residues 22-33 are compositionally biased toward low complexity; sequence NLNSNSTNSPNN.

The protein belongs to the UPF0519 family.

This Dictyostelium discoideum (Social amoeba) protein is UPF0519 protein C.